A 369-amino-acid chain; its full sequence is Glutamate 5-kinase (369 aa).

An ATP-binding site is contributed by K9. Residues S49, D136, and N148 each coordinate substrate. ATP is bound by residues 168 to 169 (TD) and 210 to 216 (TGGMLTK). The PUA domain maps to 275–355 (QGSIWVDKGA…KGVLIYRDDW (81 aa)).

It belongs to the glutamate 5-kinase family.

The protein resides in the cytoplasm. It catalyses the reaction L-glutamate + ATP = L-glutamyl 5-phosphate + ADP. The protein operates within amino-acid biosynthesis; L-proline biosynthesis; L-glutamate 5-semialdehyde from L-glutamate: step 1/2. In terms of biological role, catalyzes the transfer of a phosphate group to glutamate to form L-glutamate 5-phosphate. The chain is Glutamate 5-kinase from Streptococcus pneumoniae serotype 2 (strain D39 / NCTC 7466).